Reading from the N-terminus, the 256-residue chain is ATP synthase peripheral stalk subunit b, mitochondrial (256 aa).

Residues 1-42 (MLSRVVLSAAATAAPCLKNAAVLGPGVLQATRVFHTGQPRLA) constitute a mitochondrion transit peptide. Lys-131 is modified (N6-succinyllysine). An N6-acetyllysine mark is found at Lys-139, Lys-154, Lys-162, Lys-221, Lys-233, and Lys-244.

It belongs to the eukaryotic ATPase B chain family. Component of the ATP synthase complex composed at least of ATP5F1A/subunit alpha, ATP5F1B/subunit beta, ATP5MC1/subunit c (homooctomer), MT-ATP6/subunit a, MT-ATP8/subunit 8, ATP5ME/subunit e, ATP5MF/subunit f, ATP5MG/subunit g, ATP5MK/subunit k, ATP5MJ/subunit j, ATP5F1C/subunit gamma, ATP5F1D/subunit delta, ATP5F1E/subunit epsilon, ATP5PF/subunit F6, ATP5PB/subunit b, ATP5PD/subunit d, ATP5PO/subunit OSCP. ATP synthase complex consists of a soluble F(1) head domain (subunits alpha(3) and beta(3)) - the catalytic core - and a membrane F(0) domain - the membrane proton channel (subunits c, a, 8, e, f, g, k and j). These two domains are linked by a central stalk (subunits gamma, delta, and epsilon) rotating inside the F1 region and a stationary peripheral stalk (subunits F6, b, d, and OSCP).

The protein resides in the mitochondrion. Its subcellular location is the mitochondrion inner membrane. Its function is as follows. Subunit b, of the mitochondrial membrane ATP synthase complex (F(1)F(0) ATP synthase or Complex V) that produces ATP from ADP in the presence of a proton gradient across the membrane which is generated by electron transport complexes of the respiratory chain. ATP synthase complex consist of a soluble F(1) head domain - the catalytic core - and a membrane F(1) domain - the membrane proton channel. These two domains are linked by a central stalk rotating inside the F(1) region and a stationary peripheral stalk. During catalysis, ATP synthesis in the catalytic domain of F(1) is coupled via a rotary mechanism of the central stalk subunits to proton translocation. In vivo, can only synthesize ATP although its ATP hydrolase activity can be activated artificially in vitro. Part of the complex F(0) domain. Part of the complex F(0) domain and the peripheric stalk, which acts as a stator to hold the catalytic alpha(3)beta(3) subcomplex and subunit a/ATP6 static relative to the rotary elements. The polypeptide is ATP synthase peripheral stalk subunit b, mitochondrial (Rattus norvegicus (Rat)).